Reading from the N-terminus, the 155-residue chain is Interferon gamma (155 aa).

The N-terminal stretch at Met-1–Cys-22 is a signal peptide. N-linked (GlcNAc...) asparagine glycosylation is found at Asn-38 and Asn-90.

It belongs to the type II (or gamma) interferon family. Homodimer. Interacts with IFNGR1 (via extracellular domain); this interaction promotes IFNGR1 dimerization. In terms of tissue distribution, released primarily from activated T lymphocytes.

It localises to the secreted. Type II interferon produced by immune cells such as T-cells and NK cells that plays crucial roles in antimicrobial, antiviral, and antitumor responses by activating effector immune cells and enhancing antigen presentation. Primarily signals through the JAK-STAT pathway after interaction with its receptor IFNGR1 to affect gene regulation. Upon IFNG binding, IFNGR1 intracellular domain opens out to allow association of downstream signaling components JAK2, JAK1 and STAT1, leading to STAT1 activation, nuclear translocation and transcription of IFNG-regulated genes. Many of the induced genes are transcription factors such as IRF1 that are able to further drive regulation of a next wave of transcription. Plays a role in class I antigen presentation pathway by inducing a replacement of catalytic proteasome subunits with immunoproteasome subunits. In turn, increases the quantity, quality, and repertoire of peptides for class I MHC loading. Increases the efficiency of peptide generation also by inducing the expression of activator PA28 that associates with the proteasome and alters its proteolytic cleavage preference. Up-regulates as well MHC II complexes on the cell surface by promoting expression of several key molecules such as cathepsins B/CTSB, H/CTSH, and L/CTSL. Participates in the regulation of hematopoietic stem cells during development and under homeostatic conditions by affecting their development, quiescence, and differentiation. The sequence is that of Interferon gamma (Ifng) from Mus musculus (Mouse).